The chain runs to 335 residues: Methionine import ATP-binding protein MetN 1 (335 aa).

In terms of domain architecture, ABC transporter spans I2–V242. G38–S45 contacts ATP.

It belongs to the ABC transporter superfamily. Methionine importer (TC 3.A.1.24) family. In terms of assembly, the complex is composed of two ATP-binding proteins (MetN), two transmembrane proteins (MetI) and a solute-binding protein (MetQ).

The protein localises to the cell inner membrane. The enzyme catalyses L-methionine(out) + ATP + H2O = L-methionine(in) + ADP + phosphate + H(+). It catalyses the reaction D-methionine(out) + ATP + H2O = D-methionine(in) + ADP + phosphate + H(+). In terms of biological role, part of the ABC transporter complex MetNIQ involved in methionine import. Responsible for energy coupling to the transport system. The chain is Methionine import ATP-binding protein MetN 1 from Pseudomonas syringae pv. syringae (strain B728a).